The primary structure comprises 356 residues: MSGKTKRLMVMAGGTGGHVFPGLAVAHHLMAQGWQVRWLGTADRMEASLVPQHGIEIDFIKISGLRGKGLMAQLTAPIRIYRAVRQAQKIMRDYQPDVVLGMGGYVSGPGGLAAWLCGVPVVLHEQNGIAGLTNRWLARIAKKVLQAFPGAFPNADVVGNPVRTDVLALPLPAVRLSGREGPIRVLVIGGSQGARILNQTLPLVAASLGEQITLWHQVGKGALPEVSQAYQQAGQAGHQVVEFIDDMAAAYAWADVVVCRSGALTVSEVAAAGLPAIFVPFQHKDRQQYWNALPLEKAGAAKIIEQPQFTATSVSSLLAGWDRATLLSMAERARSVAIPDATERVAAEVVAASKSA.

UDP-N-acetyl-alpha-D-glucosamine contacts are provided by residues 15–17, Asn127, Arg163, Ser191, Ile244, 263–268, and Gln288; these read TGG and ALTVSE.

This sequence belongs to the glycosyltransferase 28 family. MurG subfamily.

It localises to the cell inner membrane. The enzyme catalyses di-trans,octa-cis-undecaprenyl diphospho-N-acetyl-alpha-D-muramoyl-L-alanyl-D-glutamyl-meso-2,6-diaminopimeloyl-D-alanyl-D-alanine + UDP-N-acetyl-alpha-D-glucosamine = di-trans,octa-cis-undecaprenyl diphospho-[N-acetyl-alpha-D-glucosaminyl-(1-&gt;4)]-N-acetyl-alpha-D-muramoyl-L-alanyl-D-glutamyl-meso-2,6-diaminopimeloyl-D-alanyl-D-alanine + UDP + H(+). It functions in the pathway cell wall biogenesis; peptidoglycan biosynthesis. Cell wall formation. Catalyzes the transfer of a GlcNAc subunit on undecaprenyl-pyrophosphoryl-MurNAc-pentapeptide (lipid intermediate I) to form undecaprenyl-pyrophosphoryl-MurNAc-(pentapeptide)GlcNAc (lipid intermediate II). The polypeptide is UDP-N-acetylglucosamine--N-acetylmuramyl-(pentapeptide) pyrophosphoryl-undecaprenol N-acetylglucosamine transferase (Yersinia pseudotuberculosis serotype O:1b (strain IP 31758)).